Consider the following 121-residue polypeptide: Small ribosomal subunit protein uS13 (121 aa).

Residues 93-121 (KGLPLRGQKTKTNARTRKGPKKTIANKKK) are disordered.

This sequence belongs to the universal ribosomal protein uS13 family. As to quaternary structure, part of the 30S ribosomal subunit. Forms a loose heterodimer with protein S19. Forms two bridges to the 50S subunit in the 70S ribosome.

In terms of biological role, located at the top of the head of the 30S subunit, it contacts several helices of the 16S rRNA. In the 70S ribosome it contacts the 23S rRNA (bridge B1a) and protein L5 of the 50S subunit (bridge B1b), connecting the 2 subunits; these bridges are implicated in subunit movement. Contacts the tRNAs in the A and P-sites. The sequence is that of Small ribosomal subunit protein uS13 from Clostridium perfringens (strain ATCC 13124 / DSM 756 / JCM 1290 / NCIMB 6125 / NCTC 8237 / Type A).